Reading from the N-terminus, the 377-residue chain is Leukocyte elastase inhibitor (377 aa).

Met1 is modified (N-acetylmethionine).

The protein belongs to the serpin family. Ov-serpin subfamily.

It is found in the cytoplasm. Its function is as follows. Regulates the activity of the neutrophil proteases. The protein is Leukocyte elastase inhibitor (serpinb1) of Xenopus tropicalis (Western clawed frog).